Consider the following 496-residue polypeptide: Putative (R)-citramalate synthase CimA (496 aa).

One can recognise a Pyruvate carboxyltransferase domain in the interval 3 to 253 (VRVLDTTLRD…DTSINIEMLY (251 aa)).

It belongs to the alpha-IPM synthase/homocitrate synthase family. Homodimer.

The catalysed reaction is pyruvate + acetyl-CoA + H2O = (3R)-citramalate + CoA + H(+). The protein operates within amino-acid biosynthesis; L-isoleucine biosynthesis; 2-oxobutanoate from pyruvate: step 1/3. Its function is as follows. Catalyzes the condensation of pyruvate and acetyl-coenzyme A to form (R)-citramalate. The protein is Putative (R)-citramalate synthase CimA of Methanothermobacter thermautotrophicus (strain ATCC 29096 / DSM 1053 / JCM 10044 / NBRC 100330 / Delta H) (Methanobacterium thermoautotrophicum).